The following is a 196-amino-acid chain: Putative NADH dehydrogenase/NAD(P)H nitroreductase Smal_0358 (196 aa).

This sequence belongs to the nitroreductase family. HadB/RutE subfamily. It depends on FMN as a cofactor.

In Stenotrophomonas maltophilia (strain R551-3), this protein is Putative NADH dehydrogenase/NAD(P)H nitroreductase Smal_0358.